A 620-amino-acid chain; its full sequence is MRYSLLFFIFLPCVITAVDLIHLHDGSPLFGEEVLSQTGKPLTRFLGIPFAEPPIGNLRFRKPKPKQPWRIPFNATTPPNSCIQSEDTYFGDFYGSTMWNPNTKLSEDCLYLNVYVPGKVDPNKKLAVMIWVYGGGFWSGTSTLDVYDGRILTVEENVILVAMNYRVSIFGFLYMNRSEAPGNMGMWDQLLAMKWVHKNIDLFGGDTSRITLFGESAGAASVSIHMLSQKSAPYFHRAIIQSGSATSPWAIEPRDVALARAVILYNAMKCGNMSLISPDYDRILDCFQRADADALRENEWAPVREFGDFPWVPVVDGDFLLENAQTSLKQGNFKKTQLLAGSNRDESIYFLTYQLPDIFPVADFFSKSEFIKDRQTWIKGVKDLLPRQILKCQLTLAAVLHEYEPQDLPISAQNWLNAMDKMLGDYHFTCSVNEMALAHTKHGGDTFYYYFTHRATQQTWPEWMGVLHGYEINFIFGEPFNQKRFNYTDEERELSNRFMRYWANFAKTGDPNKNEDGSFTQDIWPKYNSVSMEYMNMTVESSYPGQNRIGHGPRRKECAFWKAYLPNLMAAVADVGDPYLVWKQQMDKWQNEYITDWQYHFEQYKRYQTYRQSDSETCGG.

The N-terminal stretch at 1-31 is a signal peptide; it reads MRYSLLFFIFLPCVITAVDLIHLHDGSPLFG. Residue N74 is glycosylated (N-linked (GlcNAc...) asparagine). Residues C82 and C109 are joined by a disulfide bond. S216 (acyl-ester intermediate) is an active-site residue. C270 and C286 form a disulfide bridge. The N-linked (GlcNAc...) asparagine glycan is linked to N272. Catalysis depends on charge relay system residues E346 and H468. A disulfide bond links C430 and C558. Residues N486 and N536 are each glycosylated (N-linked (GlcNAc...) asparagine).

This sequence belongs to the type-B carboxylesterase/lipase family. Oligomer composed of disulfide-linked homodimers.

It is found in the synapse. The protein localises to the secreted. It localises to the cell membrane. The catalysed reaction is acetylcholine + H2O = choline + acetate + H(+). Its function is as follows. Rapidly hydrolyzes choline released into the synapse. This Caenorhabditis briggsae protein is Acetylcholinesterase 1 (ace-1).